The following is an 89-amino-acid chain: MSLSVEAKAKIVAEFGRDANDSGSTEVQVALLTAQINHLQGHFAEHKKDHHSRRGLLRMVSQRRKLLDYLKRKDVARYSSLIERLGLRR.

This sequence belongs to the universal ribosomal protein uS15 family. In terms of assembly, part of the 30S ribosomal subunit. Forms a bridge to the 50S subunit in the 70S ribosome, contacting the 23S rRNA.

Its function is as follows. One of the primary rRNA binding proteins, it binds directly to 16S rRNA where it helps nucleate assembly of the platform of the 30S subunit by binding and bridging several RNA helices of the 16S rRNA. Forms an intersubunit bridge (bridge B4) with the 23S rRNA of the 50S subunit in the ribosome. The chain is Small ribosomal subunit protein uS15 from Edwardsiella ictaluri (strain 93-146).